A 350-amino-acid chain; its full sequence is Adenine deaminase (350 aa).

Residues H24, H26, and H207 each contribute to the Zn(2+) site. The Proton donor role is filled by E210. D288 contacts Zn(2+). D289 contacts substrate.

Belongs to the metallo-dependent hydrolases superfamily. Adenosine and AMP deaminases family. Adenine deaminase type 2 subfamily. The cofactor is Zn(2+).

The catalysed reaction is adenine + H2O + H(+) = hypoxanthine + NH4(+). Functionally, catalyzes the hydrolytic deamination of adenine to hypoxanthine. Plays an important role in the purine salvage pathway and in nitrogen catabolism. This Paraburkholderia phytofirmans (strain DSM 17436 / LMG 22146 / PsJN) (Burkholderia phytofirmans) protein is Adenine deaminase.